Reading from the N-terminus, the 251-residue chain is 2,3-bisphosphoglycerate-dependent phosphoglycerate mutase (251 aa).

Residues Arg-11–Asn-18, Thr-24–Gly-25, Arg-63, Glu-90–Tyr-93, Lys-101, Arg-117–Arg-118, and Gly-184–Asn-185 each bind substrate. His-12 acts as the Tele-phosphohistidine intermediate in catalysis. Glu-90 acts as the Proton donor/acceptor in catalysis.

It belongs to the phosphoglycerate mutase family. BPG-dependent PGAM subfamily.

It carries out the reaction (2R)-2-phosphoglycerate = (2R)-3-phosphoglycerate. Its pathway is carbohydrate degradation; glycolysis; pyruvate from D-glyceraldehyde 3-phosphate: step 3/5. In terms of biological role, catalyzes the interconversion of 2-phosphoglycerate and 3-phosphoglycerate. The polypeptide is 2,3-bisphosphoglycerate-dependent phosphoglycerate mutase (Mycobacterium marinum (strain ATCC BAA-535 / M)).